The primary structure comprises 329 residues: (+)-eremophilene synthase (329 aa).

Residues D91 and E96 each contribute to the Mg(2+) site. The DDXXD motif signature appears at 91–95 (DDAYD). R185 is a substrate binding site. Mg(2+) contacts are provided by N231 and S235. Position 238 (K238) interacts with substrate. E239 is a binding site for Mg(2+). 317-318 (RY) provides a ligand contact to substrate.

This sequence belongs to the terpene synthase family. It depends on Mg(2+) as a cofactor.

It catalyses the reaction (2E,6E)-farnesyl diphosphate = (+)-eremophilene + diphosphate. Its pathway is secondary metabolite biosynthesis; terpenoid biosynthesis. Its function is as follows. Catalyzes the conversion of (2E,6E)-farnesyl diphosphate (FPP) to yield the bicyclic sesquiterpene eremophilene via a 1,10-cyclization, which requires the abstraction of the pyrophosphate from FPP to yield the (E,E)-germacradienyl cation. The only accepted substrate is farnesyl diphosphate (FPP). The polypeptide is (+)-eremophilene synthase (Sorangium cellulosum (strain So ce56) (Polyangium cellulosum (strain So ce56))).